Consider the following 461-residue polypeptide: Ornithine decarboxylase (461 aa).

Lys69 is modified (N6-(pyridoxal phosphate)lysine). Pyridoxal 5'-phosphate is bound by residues Ser200, Gly237, and 274–277; that span reads EPGR. Residue Ser303 is modified to Phosphoserine; by CK2. Position 331 to 332 (331 to 332) interacts with substrate; sequence YD. Catalysis depends on Cys360, which acts as the Proton donor; shared with dimeric partner. The residue at position 360 (Cys360) is an S-nitrosocysteine. Asp361 contacts substrate. Pyridoxal 5'-phosphate is bound at residue Tyr389.

The protein belongs to the Orn/Lys/Arg decarboxylase class-II family. Homodimer. Only the dimer is catalytically active, as the active sites are constructed of residues from both monomers. Requires pyridoxal 5'-phosphate as cofactor.

The enzyme catalyses L-ornithine + H(+) = putrescine + CO2. The protein operates within amine and polyamine biosynthesis; putrescine biosynthesis via L-ornithine pathway; putrescine from L-ornithine: step 1/1. With respect to regulation, inhibited by antizymes (AZs) OAZ1, OAZ2 and OAZ3 in response to polyamine levels. AZs inhibit the assembly of the functional homodimer by binding to ODC monomers. Additionally, OAZ1 targets ODC monomers for ubiquitin-independent proteolytic destruction by the 26S proteasome. Functionally, catalyzes the first and rate-limiting step of polyamine biosynthesis that converts ornithine into putrescine, which is the precursor for the polyamines, spermidine and spermine. Polyamines are essential for cell proliferation and are implicated in cellular processes, ranging from DNA replication to apoptosis. In Mus pahari (Gairdner's shrew-mouse), this protein is Ornithine decarboxylase (Odc1).